We begin with the raw amino-acid sequence, 212 residues long: MLTAIIDYESGNLHSAEKAFQRMARETGAGEVVVTSDADLVARADRLVLPGDGAFPACAAELRGHKGLYDAMVEAVEQKGRPFLGICVGMQLMATTGHEYEETPGLGWVAGDVVRITPENAALKVPHMGWNDLVIEAAHPIFDGIAGGDHVYFVHSYHFRVTNPTERLAHVDYGGPVTAVVGRDTMVGLQFHPEKSQAIGLRMIGNFLTWTP.

The Glutamine amidotransferase type-1 domain occupies 2-212 (LTAIIDYESG…MIGNFLTWTP (211 aa)). The Nucleophile role is filled by C87. Residues H192 and E194 contribute to the active site.

Heterodimer of HisH and HisF.

It localises to the cytoplasm. The enzyme catalyses 5-[(5-phospho-1-deoxy-D-ribulos-1-ylimino)methylamino]-1-(5-phospho-beta-D-ribosyl)imidazole-4-carboxamide + L-glutamine = D-erythro-1-(imidazol-4-yl)glycerol 3-phosphate + 5-amino-1-(5-phospho-beta-D-ribosyl)imidazole-4-carboxamide + L-glutamate + H(+). It carries out the reaction L-glutamine + H2O = L-glutamate + NH4(+). Its pathway is amino-acid biosynthesis; L-histidine biosynthesis; L-histidine from 5-phospho-alpha-D-ribose 1-diphosphate: step 5/9. Functionally, IGPS catalyzes the conversion of PRFAR and glutamine to IGP, AICAR and glutamate. The HisH subunit catalyzes the hydrolysis of glutamine to glutamate and ammonia as part of the synthesis of IGP and AICAR. The resulting ammonia molecule is channeled to the active site of HisF. This is Imidazole glycerol phosphate synthase subunit HisH from Ruegeria pomeroyi (strain ATCC 700808 / DSM 15171 / DSS-3) (Silicibacter pomeroyi).